A 390-amino-acid polypeptide reads, in one-letter code: 8-demethyl-8-(2-methoxy-alpha-L-rhamnosyl)-tetracenomycin-C 3'-O-methyltransferase (390 aa).

S-adenosyl-L-methionine contacts are provided by residues 202–208 (ELGIGGY), serine 217, aspartate 234, 252–253 (SQ), and aspartate 275. Aspartate 275 lines the Mg(2+) pocket. Histidine 278 (proton acceptor) is an active-site residue. Mg(2+) is bound by residues glutamate 303 and aspartate 304.

Belongs to the methyltransferase OleY/MycE family. Mg(2+) serves as cofactor.

It catalyses the reaction 8-demethyl-8-(2-O-methyl-alpha-L-rhamnosyl)-tetracenomycin C + S-adenosyl-L-methionine = 8-demethyl-8-(2,3-di-O-methyl-alpha-L-rhamnosyl)-tetracenomycin C + S-adenosyl-L-homocysteine + H(+). The protein operates within antibiotic biosynthesis. Functionally, O-methyltransferase involved in the biosynthesis of the permethylated L-rhamnose moiety of elloramycin, an antitumor polyketide. Mediates the methylation of the hydroxy groups at the 3'-position after the sugar moiety has been attached to the aglycon. This Streptomyces olivaceus protein is 8-demethyl-8-(2-methoxy-alpha-L-rhamnosyl)-tetracenomycin-C 3'-O-methyltransferase.